We begin with the raw amino-acid sequence, 602 residues long: RecBCD enzyme subunit RecD (602 aa).

174–181 is a binding site for ATP; sequence GGPGTGKT.

This sequence belongs to the RecD family. As to quaternary structure, heterotrimer of RecB, RecC and RecD. All subunits contribute to DNA-binding.

It carries out the reaction Couples ATP hydrolysis with the unwinding of duplex DNA at the replication fork by translocating in the 5'-3' direction. This creates two antiparallel DNA single strands (ssDNA). The leading ssDNA polymer is the template for DNA polymerase III holoenzyme which synthesizes a continuous strand.. The catalysed reaction is ATP + H2O = ADP + phosphate + H(+). Its function is as follows. A helicase/nuclease that prepares dsDNA breaks (DSB) for recombinational DNA repair. Binds to DSBs and unwinds DNA via a highly rapid and processive ATP-dependent bidirectional helicase activity. Unwinds dsDNA until it encounters a Chi (crossover hotspot instigator) sequence from the 3' direction. Cuts ssDNA a few nucleotides 3' to the Chi site. The properties and activities of the enzyme are changed at Chi. The Chi-altered holoenzyme produces a long 3'-ssDNA overhang and facilitates RecA-binding to the ssDNA for homologous DNA recombination and repair. Holoenzyme degrades any linearized DNA that is unable to undergo homologous recombination. In the holoenzyme this subunit has ssDNA-dependent ATPase and 5'-3' helicase activity. When added to pre-assembled RecBC greatly stimulates nuclease activity and augments holoenzyme processivity. Negatively regulates the RecA-loading ability of RecBCD. In Buchnera aphidicola subsp. Schizaphis graminum (strain Sg), this protein is RecBCD enzyme subunit RecD.